The primary structure comprises 721 residues: DNA ligase (721 aa).

Residues 39 to 43, 89 to 90, and E123 each bind NAD(+); these read DAEYD and SL. The active-site N6-AMP-lysine intermediate is K125. Residues R146, E186, K302, and K326 each coordinate NAD(+). Zn(2+) is bound by residues C418, C421, C436, and C442. The interval 556-588 is disordered; it reads QASSAAREGEPANADGAYDPATVTPDSDTAGAE. In terms of domain architecture, BRCT spans 641-721; the sequence is TKDSAVAGKT…AWAEIVRQAG (81 aa).

The protein belongs to the NAD-dependent DNA ligase family. LigA subfamily. Requires Mg(2+) as cofactor. Mn(2+) serves as cofactor.

The enzyme catalyses NAD(+) + (deoxyribonucleotide)n-3'-hydroxyl + 5'-phospho-(deoxyribonucleotide)m = (deoxyribonucleotide)n+m + AMP + beta-nicotinamide D-nucleotide.. Its function is as follows. DNA ligase that catalyzes the formation of phosphodiester linkages between 5'-phosphoryl and 3'-hydroxyl groups in double-stranded DNA using NAD as a coenzyme and as the energy source for the reaction. It is essential for DNA replication and repair of damaged DNA. The chain is DNA ligase from Novosphingobium aromaticivorans (strain ATCC 700278 / DSM 12444 / CCUG 56034 / CIP 105152 / NBRC 16084 / F199).